A 202-amino-acid polypeptide reads, in one-letter code: Proteasome subunit beta 1 (202 aa).

Residue Met-1 is a propeptide, removed in mature form; by autocatalysis. The active-site Nucleophile is Thr-2.

It belongs to the peptidase T1B family. As to quaternary structure, the 20S proteasome core is composed of 14 alpha and 14 beta subunits that assemble into four stacked heptameric rings, resulting in a barrel-shaped structure. The two inner rings, each composed of seven catalytic beta subunits, are sandwiched by two outer rings, each composed of seven alpha subunits. The catalytic chamber with the active sites is on the inside of the barrel. Has a gated structure, the ends of the cylinder being occluded by the N-termini of the alpha-subunits. Is capped at one or both ends by the proteasome regulatory ATPase, PAN.

It is found in the cytoplasm. It carries out the reaction Cleavage of peptide bonds with very broad specificity.. With respect to regulation, the formation of the proteasomal ATPase PAN-20S proteasome complex, via the docking of the C-termini of PAN into the intersubunit pockets in the alpha-rings, triggers opening of the gate for substrate entry. Interconversion between the open-gate and close-gate conformations leads to a dynamic regulation of the 20S proteasome proteolysis activity. Functionally, component of the proteasome core, a large protease complex with broad specificity involved in protein degradation. This chain is Proteasome subunit beta 1, found in Pyrobaculum arsenaticum (strain DSM 13514 / JCM 11321 / PZ6).